Reading from the N-terminus, the 182-residue chain is NAD(P)H-quinone oxidoreductase subunit I, chloroplastic (182 aa).

4Fe-4S ferredoxin-type domains lie at 52-81 (GRIH…VDWE) and 92-121 (KSYS…MTEE). [4Fe-4S] cluster is bound by residues C61, C64, C67, C71, C101, C104, C107, and C111.

Belongs to the complex I 23 kDa subunit family. As to quaternary structure, NDH is composed of at least 16 different subunits, 5 of which are encoded in the nucleus. [4Fe-4S] cluster serves as cofactor.

The protein resides in the plastid. The protein localises to the chloroplast thylakoid membrane. The catalysed reaction is a plastoquinone + NADH + (n+1) H(+)(in) = a plastoquinol + NAD(+) + n H(+)(out). It catalyses the reaction a plastoquinone + NADPH + (n+1) H(+)(in) = a plastoquinol + NADP(+) + n H(+)(out). NDH shuttles electrons from NAD(P)H:plastoquinone, via FMN and iron-sulfur (Fe-S) centers, to quinones in the photosynthetic chain and possibly in a chloroplast respiratory chain. The immediate electron acceptor for the enzyme in this species is believed to be plastoquinone. Couples the redox reaction to proton translocation, and thus conserves the redox energy in a proton gradient. The protein is NAD(P)H-quinone oxidoreductase subunit I, chloroplastic of Chaetosphaeridium globosum (Charophycean green alga).